The chain runs to 668 residues: Type II methyltransferase M.MwoI (668 aa).

This sequence belongs to the N(4)/N(6)-methyltransferase family. N(4) subfamily.

It carries out the reaction a 2'-deoxycytidine in DNA + S-adenosyl-L-methionine = an N(4)-methyl-2'-deoxycytidine in DNA + S-adenosyl-L-homocysteine + H(+). A beta subtype methylase, recognizes the double-stranded DNA sequence 5'-GCNNNNNNNGC-3', methylates C-2 on both strands, and protects the DNA from cleavage by the MwoI endonuclease. The sequence is that of Type II methyltransferase M.MwoI from Methanothermobacter wolfeii (Methanobacterium wolfei).